A 274-amino-acid chain; its full sequence is Glutamate racemase (274 aa).

Residues 9–10 (DS) and 41–42 (YG) contribute to the substrate site. Cys-73 acts as the Proton donor/acceptor in catalysis. Residue 74–75 (NT) coordinates substrate. Cys-183 serves as the catalytic Proton donor/acceptor. 184 to 185 (TH) contributes to the substrate binding site.

The protein belongs to the aspartate/glutamate racemases family.

It catalyses the reaction L-glutamate = D-glutamate. It participates in cell wall biogenesis; peptidoglycan biosynthesis. Provides the (R)-glutamate required for cell wall biosynthesis. The polypeptide is Glutamate racemase (Shewanella baltica (strain OS155 / ATCC BAA-1091)).